The following is a 208-amino-acid chain: Guanylate kinase (208 aa).

The Guanylate kinase-like domain maps to 5 to 184 (GLLIVFSGPS…AAERVKCVIE (180 aa)). An ATP-binding site is contributed by 12–19 (GPSGVGKG).

Belongs to the guanylate kinase family.

The protein localises to the cytoplasm. The catalysed reaction is GMP + ATP = GDP + ADP. In terms of biological role, essential for recycling GMP and indirectly, cGMP. The protein is Guanylate kinase of Streptococcus pneumoniae (strain ATCC BAA-255 / R6).